We begin with the raw amino-acid sequence, 1274 residues long: DENN domain-containing protein 5B (1274 aa).

The residue at position 2 (S2) is an N-acetylserine. One can recognise a uDENN domain in the interval D39–S244. Residues S49 and S178 each carry the phosphoserine modification. In terms of domain architecture, cDENN spans E263–V399. The dDENN domain maps to V401–E581. The RUN 1 domain occupies L772–T932. Residue S822 is modified to Phosphoserine. The chain crosses the membrane as a helical span at residues L916 to I936. The region spanning I936 to I1044 is the PLAT domain. At T1062 the chain carries Phosphothreonine. S1068, S1076, and S1079 each carry phosphoserine. Positions T1118–S1267 constitute an RUN 2 domain.

It belongs to the RAB6IP1 family.

The protein localises to the membrane. Its function is as follows. Guanine nucleotide exchange factor (GEF) which may activate RAB39A and/or RAB39B. Promotes the exchange of GDP to GTP, converting inactive GDP-bound Rab proteins into their active GTP-bound form. This is DENN domain-containing protein 5B (DENND5B) from Homo sapiens (Human).